Reading from the N-terminus, the 320-residue chain is ATP-dependent 6-phosphofructokinase (320 aa).

Residue Gly12 participates in ATP binding. 22-26 (RGVVR) contributes to the ADP binding site. ATP-binding positions include 73-74 (RF) and 103-106 (GDGS). Residue Asp104 coordinates Mg(2+). Residue 126 to 128 (TID) participates in substrate binding. Asp128 acts as the Proton acceptor in catalysis. Arg155 contributes to the ADP binding site. Residues Arg163 and 170–172 (MGR) contribute to the substrate site. Residues 186-188 (GCE), Lys212, and 214-216 (KKH) each bind ADP. Residues Glu223, Arg244, and 250-253 (HIQR) contribute to the substrate site.

The protein belongs to the phosphofructokinase type A (PFKA) family. ATP-dependent PFK group I subfamily. Prokaryotic clade 'B1' sub-subfamily. As to quaternary structure, homotetramer. Requires Mg(2+) as cofactor.

The protein localises to the cytoplasm. The catalysed reaction is beta-D-fructose 6-phosphate + ATP = beta-D-fructose 1,6-bisphosphate + ADP + H(+). It participates in carbohydrate degradation; glycolysis; D-glyceraldehyde 3-phosphate and glycerone phosphate from D-glucose: step 3/4. Allosterically activated by ADP and other diphosphonucleosides, and allosterically inhibited by phosphoenolpyruvate. In terms of biological role, catalyzes the phosphorylation of D-fructose 6-phosphate to fructose 1,6-bisphosphate by ATP, the first committing step of glycolysis. The sequence is that of ATP-dependent 6-phosphofructokinase from Vibrio cholerae serotype O1 (strain ATCC 39315 / El Tor Inaba N16961).